Consider the following 104-residue polypeptide: Integration host factor subunit beta (104 aa).

This sequence belongs to the bacterial histone-like protein family. As to quaternary structure, heterodimer of an alpha and a beta chain.

Functionally, this protein is one of the two subunits of integration host factor, a specific DNA-binding protein that functions in genetic recombination as well as in transcriptional and translational control. This Neisseria gonorrhoeae protein is Integration host factor subunit beta (ihfB).